Reading from the N-terminus, the 353-residue chain is Putative glycosyltransferase TagX (353 aa).

The protein belongs to the glycosyltransferase 2 family.

The chain is Putative glycosyltransferase TagX (tagX) from Staphylococcus aureus (strain Mu50 / ATCC 700699).